The primary structure comprises 116 residues: Large ribosomal subunit protein bL19 (116 aa).

Belongs to the bacterial ribosomal protein bL19 family.

This protein is located at the 30S-50S ribosomal subunit interface and may play a role in the structure and function of the aminoacyl-tRNA binding site. The polypeptide is Large ribosomal subunit protein bL19 (Fusobacterium nucleatum subsp. nucleatum (strain ATCC 25586 / DSM 15643 / BCRC 10681 / CIP 101130 / JCM 8532 / KCTC 2640 / LMG 13131 / VPI 4355)).